We begin with the raw amino-acid sequence, 196 residues long: Nucleoside triphosphate pyrophosphatase (196 aa).

Catalysis depends on Asp-73, which acts as the Proton acceptor.

It belongs to the Maf family. A divalent metal cation is required as a cofactor.

The protein localises to the cytoplasm. It carries out the reaction a ribonucleoside 5'-triphosphate + H2O = a ribonucleoside 5'-phosphate + diphosphate + H(+). The enzyme catalyses a 2'-deoxyribonucleoside 5'-triphosphate + H2O = a 2'-deoxyribonucleoside 5'-phosphate + diphosphate + H(+). In terms of biological role, nucleoside triphosphate pyrophosphatase. May have a dual role in cell division arrest and in preventing the incorporation of modified nucleotides into cellular nucleic acids. This is Nucleoside triphosphate pyrophosphatase from Chlamydia pneumoniae (Chlamydophila pneumoniae).